The primary structure comprises 359 residues: UPF0283 membrane protein RHECIAT_CH0002430 (359 aa).

The disordered stretch occupies residues 1-50; it reads MSKPPSDPPRRPPAAFAYEDEASEPRNSGRQQQGRRKPESFSENIVVTPD. 2 helical membrane-spanning segments follow: residues 77 to 97 and 111 to 131; these read FGKI…GLWT and LGYA…ALVI.

This sequence belongs to the UPF0283 family.

It localises to the cell inner membrane. This is UPF0283 membrane protein RHECIAT_CH0002430 from Rhizobium etli (strain CIAT 652).